We begin with the raw amino-acid sequence, 536 residues long: MVSIKRYEIISFVIAAFFFLSGLSMWIAFWPIFNSELRSNYKLGANDDGSLHYAAFLYANPPMKNVMKFNLFNVTNPDEVKYLGAKPELIEVGGYAFLESEQKKYYEFSSDKTKMFYQNYKQYHYSEVDNDAGYNYNDKIMFPNSIAEGAVSTVFGPQSEFSPTAKILVSIGLVMLGEYPFISKTVKDVLMDGYEDPLLSVAHSGIFISLVNFYGYGSQLNYIPEMKTFAYLSGYNNSYDENYWINTGYNDFNKLGFVESWAGLEQLPASFWPTLEARQIKGPDSGSLSKIHLTKTDELPFFLSFMCRSFKRTYWQDGLVDGIKTMAFAVPYEEFDTTLEKNAGFRYKNQENVDYFPDWCDKNTTTSLSQCQKTANGTFLLPPGIFPLVCYPGHNAQPPFTVLVSPPHFLYSPPEVQHHLSGMNPDPEKHKPMVFHQEKTSGTALQVDVRFQVNLPVVNNKGSIMSSQMPNVIIPLFYEDSHALVKDFVMDTVWLGVIIVPRIIEYLKFVLIFISICILTTLLVIRVRVKGTVSVV.

At 1-8 (MVSIKRYE) the chain is on the cytoplasmic side. The helical transmembrane segment at 9 to 29 (IISFVIAAFFFLSGLSMWIAF) threads the bilayer. Residues 30–502 (WPIFNSELRS…VWLGVIIVPR (473 aa)) lie on the Extracellular side of the membrane. Asn73, Asn236, Asn363, and Asn376 each carry an N-linked (GlcNAc...) asparagine glycan. Residues 503–523 (IIEYLKFVLIFISICILTTLL) traverse the membrane as a helical segment. Residues 524–536 (VIRVRVKGTVSVV) lie on the Cytoplasmic side of the membrane.

This sequence belongs to the CD36 family.

It localises to the membrane. This is an uncharacterized protein from Caenorhabditis elegans.